We begin with the raw amino-acid sequence, 1052 residues long: Membrane-bound transcription factor site-1 protease (1052 aa).

Positions 1–17 (MKLVSTWLLVLVVLLCG) are cleaved as a signal peptide. The propeptide occupies 18–186 (KRHLGDRLGT…TGRHSSRRLL (169 aa)). Asparagine 148 is a glycosylation site (N-linked (GlcNAc...) asparagine). Residue serine 168 is modified to Phosphoserine. Residues 187 to 999 (RAIPRQVAQT…MPGRYNQEVG (813 aa)) are Lumenal-facing. One can recognise a Peptidase S8 domain in the interval 190-472 (PRQVAQTLQA…HGKLDLLRAY (283 aa)). The active-site Charge relay system is the aspartate 218. The N-linked (GlcNAc...) asparagine glycan is linked to asparagine 236. The active-site Charge relay system is the histidine 249. An N-linked (GlcNAc...) asparagine glycan is attached at asparagine 305. Catalysis depends on serine 414, which acts as the Charge relay system. N-linked (GlcNAc...) asparagine glycans are attached at residues asparagine 515 and asparagine 728. Positions 877-887 (PSLSHSGNRQR) are enriched in polar residues. A disordered region spans residues 877–900 (PSLSHSGNRQRPPSGAGLAPPERM). A glycan (N-linked (GlcNAc...) asparagine) is linked at asparagine 939. The helical transmembrane segment at 1000 to 1022 (QTIPVFAFLGAMVALAFFVVQIS) threads the bilayer. The Cytoplasmic portion of the chain corresponds to 1023 to 1052 (KAKSRPKRRRPRAKRPQLAQQAHPARTPSV). Over residues 1026 to 1037 (SRPKRRRPRAKR) the composition is skewed to basic residues. A disordered region spans residues 1026 to 1052 (SRPKRRRPRAKRPQLAQQAHPARTPSV).

Belongs to the peptidase S8 family. As to quaternary structure, interacts with LYSET; this interaction bridges GNPTAB to MBTPS1. Requires Ca(2+) as cofactor. In terms of processing, the 148 kDa zymogen is processed progressively into two membrane-bound 120 and 106 kDa forms in the endoplasmic reticulum, and late into a secreted 98 kDa form. The propeptide is autocatalytically removed through an intramolecular cleavage after Leu-186. Further cleavage generates 14, 10, and 8 kDa intermediates.

It localises to the endoplasmic reticulum membrane. Its subcellular location is the golgi apparatus membrane. The catalysed reaction is Processes precursors containing basic and hydrophobic/aliphatic residues at P4 and P2, respectively, with a relatively relaxed acceptance of amino acids at P1 and P3.. Inhibited by divalent copper and zinc ions, but not by nickel or cobalt. Inhibited by its prosegment, but not smaller fragments. Inhibited by 4-(2-aminoethyl)benzenesulfonyl fluoride (AEBSF), a serine protease inhibitor. Functionally, serine protease that cleaves after hydrophobic or small residues, provided that Arg or Lys is in position P4: known substrates include SREBF1/SREBP1, SREBF2/SREBP2, BDNF, GNPTAB, ATF6, ATF6B and FAM20C. Cleaves substrates after Arg-Ser-Val-Leu (SREBP2), Arg-His-Leu-Leu (ATF6), Arg-Gly-Leu-Thr (BDNF) and its own propeptide after Arg-Arg-Leu-Leu. Catalyzes the first step regulated intramembrane proteolysis activation of the sterol regulatory element-binding proteins (SREBPs) SREBF1/SREBP1 and SREBF2/SREBP2. Also mediates the first step of the regulated intramembrane proteolytic activation of the cyclic AMP-dependent transcription factor ATF-6 (ATF6 and ATF6B). Mediates the protein cleavage of GNPTAB into subunit alpha and beta, thereby participating in biogenesis of lysosomes. Cleaves the propeptide from FAM20C which is required for FAM20C secretion from the Golgi apparatus membrane and for enhancement of FAM20C kinase activity, promoting osteoblast differentiation and biomineralization. Involved in the regulation of M6P-dependent Golgi-to-lysosome trafficking of lysosomal enzymes. It is required for the activation of CREB3L2/BBF2H7, a transcriptional activator of MIA3/TANGO and other genes controlling mega vesicle formation. Therefore, it plays a key role in the regulation of mega vesicle-mediated collagen trafficking. In astrocytes and osteoblasts, upon DNA damage and ER stress, mediates the first step of the regulated intramembrane proteolytic activation of the transcription factor CREB3L1, leading to the inhibition of cell-cycle progression. In Mus musculus (Mouse), this protein is Membrane-bound transcription factor site-1 protease (Mbtps1).